The following is a 644-amino-acid chain: 3D-(3,5/4)-trihydroxycyclohexane-1,2-dione hydrolase 1 (644 aa).

Residue Glu65 participates in thiamine diphosphate binding. The tract at residues 442 to 522 is thiamine pyrophosphate binding; that stretch reads SLPGDLQRMW…INVLLFDNSG (81 aa). The Mg(2+) site is built by Asp493 and Asn520.

The protein belongs to the TPP enzyme family. It depends on Mg(2+) as a cofactor. Requires thiamine diphosphate as cofactor.

It catalyses the reaction 3D-3,5/4-trihydroxycyclohexane-1,2-dione + H2O = 5-deoxy-D-glucuronate + H(+). The protein operates within polyol metabolism; myo-inositol degradation into acetyl-CoA; acetyl-CoA from myo-inositol: step 3/7. Involved in the cleavage of the C1-C2 bond of 3D-(3,5/4)-trihydroxycyclohexane-1,2-dione (THcHDO) to yield 5-deoxy-glucuronate (5DG). The sequence is that of 3D-(3,5/4)-trihydroxycyclohexane-1,2-dione hydrolase 1 from Bacillus cereus (strain ZK / E33L).